The primary structure comprises 5101 residues: Malformin synthetase mlfA (5101 aa).

The adenylation 1 stretch occupies residues 225–616 (ERHAANRPHS…CGRADTQVKL (392 aa)). Positions 757–830 (SRLEQKIQLA…EAASLAEVQE (74 aa)) constitute a Carrier 1 domain. S791 is subject to O-(pantetheine 4'-phosphoryl)serine. Residues 868–1299 (EDVFPCTTMQ…ALNTLSLLQA (432 aa)) are condensation 1. Positions 1327-1716 (DRWVTRQPEG…GRKDTQVKLR (390 aa)) are adenylation 2. Residues 1854–1931 (TPTLELERTL…QLAAEVGEPA (78 aa)) enclose the Carrier 2 domain. The residue at position 1891 (S1891) is an O-(pantetheine 4'-phosphoryl)serine. Disordered stretches follow at residues 1932-1961 (GQSA…DGVD) and 1994-2020 (GGSS…KKNA). 2 stretches are compositionally biased toward low complexity: residues 1934–1958 (SASS…STND) and 1996–2013 (SSSN…SSSS). The tract at residues 2066–2481 (EDIYPATALQ…AVSCSDKETL (416 aa)) is condensation 2. An adenylation 3 region spans residues 2504–2896 (RRTPHAPAVC…IGRRDGQLKL (393 aa)). One can recognise a Carrier 3 domain in the interval 3032-3108 (RPVTSQEHEM…QLICHLNTIR (77 aa)). O-(pantetheine 4'-phosphoryl)serine is present on S3069. 2 condensation regions span residues 3125 to 3590 (WVAL…TYDQ) and 3611 to 4030 (NIYP…EHLV). The tract at residues 4055 to 4445 (HNSRQAVCAW…VGRKDNQIKF (391 aa)) is adenylation 4. A Carrier 4 domain is found at 4579–4655 (MPSTAAERKM…DLSDQAKSLI (77 aa)). S4616 is subject to O-(pantetheine 4'-phosphoryl)serine. The segment at 4712–5097 (IVVDIPGPID…KIVGLLRHPE (386 aa)) is condensation 5.

Belongs to the NRP synthetase family.

It functions in the pathway secondary metabolite biosynthesis. Its function is as follows. Nonribosomal peptide synthetase; part of the gene cluster that mediates the biosynthesis of malformins, cyclic pentapeptides with a disulfide bond between 2 consecutive cysteins, that show potential anti-tumor as well as antimalarial and antitrypanosomal properties. The nonribosomal peptide synthetase mlfA is responsible of the formation of the cyclic pentapeptide. The malformin biosynthesis clusters in malformin-producing fungi also contain enzymes involved in the formation of the disulfide bond between the two consecutive cysteins within malformins, in addition to additional tailoring enzymes such as methyltransferases or oxidoreductases. They are also composed of up to 4 major facilitator superfamily transporters, and transcription factors probably involved in the regulation of the expression of those clusters. The protein is Malformin synthetase mlfA of Aspergillus kawachii (strain NBRC 4308) (White koji mold).